Here is a 207-residue protein sequence, read N- to C-terminus: Non-structural protein 5 (207 aa).

In terms of domain architecture, DRBM spans 2–69 (DPVSVVHSFA…CVLISNDLKE (68 aa)).

The protein is Non-structural protein 5 (Segment-12) of Banna virus (BAV).